We begin with the raw amino-acid sequence, 481 residues long: Cysteine--tRNA ligase (481 aa).

Cys-29 lines the Zn(2+) pocket. The short motif at 31–41 is the 'HIGH' region element; it reads PTVYDYSHLGH. 3 residues coordinate Zn(2+): Cys-210, His-235, and Glu-239. A 'KMSKS' region motif is present at residues 272-276; it reads KMSKS. ATP is bound at residue Lys-275.

The protein belongs to the class-I aminoacyl-tRNA synthetase family. As to quaternary structure, monomer. It depends on Zn(2+) as a cofactor.

It localises to the cytoplasm. It carries out the reaction tRNA(Cys) + L-cysteine + ATP = L-cysteinyl-tRNA(Cys) + AMP + diphosphate. This is Cysteine--tRNA ligase from Anaeromyxobacter dehalogenans (strain 2CP-1 / ATCC BAA-258).